The primary structure comprises 491 residues: Nickel-binding protein NikA (491 aa).

Positions 1–18 (MKFKRLATIFSAVLVLSG) are cleaved as a signal peptide. A lipid anchor (N-palmitoyl cysteine) is attached at Cys-19. Residue Cys-19 is the site of S-diacylglycerol cysteine attachment.

This sequence belongs to the bacterial solute-binding protein 5 family. In terms of assembly, the complex is composed of two ATP-binding proteins (NikD and NikE), two transmembrane proteins (NikB and NikC) and a solute-binding protein (NikA).

The protein resides in the cell membrane. Functionally, part of the ABC transporter complex NikABCDE (Opp2) involved in nickel import. Binds nickel and transfers it to the membrane-bound permease. Required for full urease activity and plays a significant role in the virulence of S.aureus during urinary tract infection (UTI). May bind nickel via a nickel-chelator. This is Nickel-binding protein NikA from Staphylococcus aureus (strain NCTC 8325 / PS 47).